The primary structure comprises 285 residues: Phosphoribosylaminoimidazole-succinocarboxamide synthase (285 aa).

The protein belongs to the SAICAR synthetase family.

It carries out the reaction 5-amino-1-(5-phospho-D-ribosyl)imidazole-4-carboxylate + L-aspartate + ATP = (2S)-2-[5-amino-1-(5-phospho-beta-D-ribosyl)imidazole-4-carboxamido]succinate + ADP + phosphate + 2 H(+). Its pathway is purine metabolism; IMP biosynthesis via de novo pathway; 5-amino-1-(5-phospho-D-ribosyl)imidazole-4-carboxamide from 5-amino-1-(5-phospho-D-ribosyl)imidazole-4-carboxylate: step 1/2. The protein is Phosphoribosylaminoimidazole-succinocarboxamide synthase of Leptospira interrogans serogroup Icterohaemorrhagiae serovar copenhageni (strain Fiocruz L1-130).